The following is a 335-amino-acid chain: Phenylalanine--tRNA ligase alpha subunit (335 aa).

Position 262 (Glu262) interacts with Mg(2+).

Belongs to the class-II aminoacyl-tRNA synthetase family. Phe-tRNA synthetase alpha subunit type 1 subfamily. Tetramer of two alpha and two beta subunits. It depends on Mg(2+) as a cofactor.

Its subcellular location is the cytoplasm. The enzyme catalyses tRNA(Phe) + L-phenylalanine + ATP = L-phenylalanyl-tRNA(Phe) + AMP + diphosphate + H(+). In Prochlorococcus marinus (strain MIT 9313), this protein is Phenylalanine--tRNA ligase alpha subunit.